A 98-amino-acid polypeptide reads, in one-letter code: Large ribosomal subunit protein uL23 (98 aa).

Belongs to the universal ribosomal protein uL23 family. As to quaternary structure, part of the 50S ribosomal subunit. Contacts protein L29, and trigger factor when it is bound to the ribosome.

Its function is as follows. One of the early assembly proteins it binds 23S rRNA. One of the proteins that surrounds the polypeptide exit tunnel on the outside of the ribosome. Forms the main docking site for trigger factor binding to the ribosome. In Clostridium beijerinckii (strain ATCC 51743 / NCIMB 8052) (Clostridium acetobutylicum), this protein is Large ribosomal subunit protein uL23.